Reading from the N-terminus, the 980-residue chain is Hypoxia up-regulated protein 1 (980 aa).

The N-terminal stretch at 1–24 (MREKLSLWAIFCLVVAFLPSQTES) is a signal peptide. 2 disordered regions span residues 558-682 (EEES…DIAV) and 894-980 (KPKP…EDEL). 2 stretches are compositionally biased toward basic and acidic residues: residues 599–656 (AGKE…PEEK) and 896–906 (KPKDKAKDKNS). Residues 907–916 (TSESSKANST) are compositionally biased toward polar residues. 2 stretches are compositionally biased toward basic and acidic residues: residues 918–949 (DAEK…KAEE) and 960–980 (TDDK…EDEL). Positions 977-980 (EDEL) match the Prevents secretion from ER motif.

It belongs to the heat shock protein 70 family.

It is found in the endoplasmic reticulum lumen. Its function is as follows. Has a pivotal role in cytoprotective cellular mechanisms triggered by oxygen deprivation. May play a role as a molecular chaperone and participate in protein folding. In Danio rerio (Zebrafish), this protein is Hypoxia up-regulated protein 1 (hyou1).